We begin with the raw amino-acid sequence, 314 residues long: Serine hydrolase-like protein 2 (314 aa).

Positions 33 to 293 (PPVLCLHGWL…GNHCVHMSEP (261 aa)) constitute an AB hydrolase-1 domain. The active site involves serine 108.

Belongs to the AB hydrolase superfamily.

Its subcellular location is the cytoplasm. The protein localises to the perinuclear region. It localises to the peroxisome. Its function is as follows. Probable serine hydrolase. May be related to cell muscle hypertrophy. In Homo sapiens (Human), this protein is Serine hydrolase-like protein 2 (SERHL2).